Here is a 412-residue protein sequence, read N- to C-terminus: Putative competence-damage inducible protein (412 aa).

The protein belongs to the CinA family.

The sequence is that of Putative competence-damage inducible protein from Bacillus cereus (strain B4264).